Here is an 84-residue protein sequence, read N- to C-terminus: Putative membrane protein insertion efficiency factor (84 aa).

The disordered stretch occupies residues 61 to 84; sequence SQGFEDPLPPNTKRTNLTHGRQTK. The segment covering 72 to 84 has biased composition (polar residues); the sequence is TKRTNLTHGRQTK.

The protein belongs to the UPF0161 family.

The protein localises to the cell inner membrane. Could be involved in insertion of integral membrane proteins into the membrane. In Leptospira borgpetersenii serovar Hardjo-bovis (strain JB197), this protein is Putative membrane protein insertion efficiency factor.